The following is an 870-amino-acid chain: MAGLTAAVPQPGVLLILLLNLLHPAQPGGVPGAVPGGVPGGLPGGVPGGVYYPGAGIGGGLGGGALGPGGKPPKPGAGLLGAFGAGPGGLGGAGPGAGLSYASRPGGVLVPGGGAGAAAAYKAAAKAGAGLGGIGGVPGGVGVGGVPGAVGVGGVPGAVGGIGGIGGLGVSTGAVVPQLGAGVGAGGKPGKVPGVGLPGVYPGGVLPGTGARFPGVGVLPGVPTGTGVKAKVPGGGGGAFSGIPGVGPFGGQQPGVPLGYPIKAPKLPGGYGLPYTNGKLPYGVAGAGGKAGYPTGTGVGSQAAVAAAKAAKYAGAGGGGVLPGVGGGGIPGGAGAIPGIGGITGAGTPAAAAAAKAAAKAAKYGAAGGLVPGGPGVRVPGAGIPGVGIPGVGGIPGVGGIPGVGGIPGVGGPGIGGPGIVGGPGAVSPAAAAKAAAKAAKYGARGGVGIPTYGVGAGGFPGYGVGAGAGLGGASQAAAAAAAAKAAKYGAGGAGTLGGLVPGAVPGALPGAVPGALPGAVPGALPGAVPGVPGTGGVPGAGTPAAAAAAAAAKAAAKAGQYGLGPGVGGVPGGVGVGGLPGGVGPGGVTGIGTGPGTGLVPGDLGGAGTPAAAKSAAKAAAKAQYRAAAGLGAGVPGLGVGAGVPGFGAGAGGFGAGAGVPGFGAGAVPGSLAASKAAKYGAAGGLGGPGGLGGPGGLGGPGGFGGPGGLGGVPGGVAGGAPAAAAAAKAAAKAAQYGLGGAGGLGAGGLGAGGLGAGGLGAGGLGAGGLGAGGVIPGAVGLGGVSPAAAAKAAKYGAAGLGGVLGARPFPGGGVAARPGFGLSPIYPGGGAGGLGVGGKPPKPYGGALGALGYQGGGCFGKSCGRKRK.

A signal peptide spans 1–27; the sequence is MAGLTAAVPQPGVLLILLLNLLHPAQP. 4-hydroxyproline is present on residues Pro-39 and Pro-75. Pro-87 carries the hydroxyproline modification. Pro-105 bears the 4-hydroxyproline mark. 2 positions are modified to allysine: Lys-122 and Lys-126. 4 positions are modified to 4-hydroxyproline: Pro-207, Pro-220, Pro-223, and Pro-244. Allysine is present on residues Lys-290 and Lys-309. Pro-338 carries the 4-hydroxyproline modification. Allysine occurs at positions 360 and 363. Pro-375 is modified (hydroxyproline). A 4-hydroxyproline mark is found at Pro-402 and Pro-408. Pro-413 and Pro-418 each carry hydroxyproline. Lys-434, Lys-438, Lys-441, Lys-485, and Lys-488 each carry allysine. 4-hydroxyproline occurs at positions 518 and 539. Lys-554, Lys-558, Lys-615, Lys-619, and Lys-623 each carry allysine. 4-hydroxyproline occurs at positions 637, 646, 662, and 670. Allysine is present on residues Lys-677 and Lys-680. At Pro-715 the chain carries 4-hydroxyproline. Residues Lys-730, Lys-734, Lys-793, and Lys-796 each carry the allysine modification. At Pro-842 the chain carries 4-hydroxyproline. A disulfide bond links Cys-860 and Cys-865.

Belongs to the elastin family. The polymeric elastin chains are cross-linked together into an extensible 3D network. Forms a ternary complex with BGN and MFAP2. Interacts with MFAP2 via divalent cations (calcium &gt; magnesium &gt; manganese) in a dose-dependent and saturating manner. Interacts with FBLN5 and FBN1. Forms a ternary complex with FBN1 and FBLN2 or FBLN5. Interacts with MFAP4 in a Ca (2+)-dependent manner; this interaction promotes ELN self-assembly. Interacts with EFEMP2 with moderate affinity. Elastin is formed through the cross-linking of its soluble precursor tropoelastin. Cross-linking is initiated through the action of lysyl oxidase on exposed lysines to form allysine. Subsequent spontaneous condensation reactions with other allysine or unmodified lysine residues result in various bi-, tri-, and tetrafunctional cross-links. The most abundant cross-links in mature elastin fibers are lysinonorleucine, allysine aldol, desmosine, and isodesmosine. In terms of processing, hydroxylation on proline residues within the sequence motif, GXPG, is most likely to be 4-hydroxy as this fits the requirement for 4-hydroxylation in vertebrates.

The protein localises to the secreted. Its subcellular location is the extracellular space. It localises to the extracellular matrix. Functionally, major structural protein of tissues such as aorta and nuchal ligament, which must expand rapidly and recover completely. Molecular determinant of the late arterial morphogenesis, stabilizing arterial structure by regulating proliferation and organization of vascular smooth muscle. The chain is Elastin (Eln) from Rattus norvegicus (Rat).